The primary structure comprises 341 residues: Krueppel-like factor 17 (341 aa).

The disordered stretch occupies residues 214 to 252; the sequence is VTESNTQEEPFVREPPTPAPEGAESPSTSRGATRRQSPV. Over residues 238–252 the composition is skewed to polar residues; the sequence is SPSTSRGATRRQSPV. 3 C2H2-type zinc fingers span residues 256 to 280, 286 to 310, and 316 to 338; these read YVCT…QRKH, FACD…KRIH, and HKCD…KRTH.

Belongs to the Sp1 C2H2-type zinc-finger protein family. Exclusively expressed in testis and ovary. Localized to step 3-8 spermatids in testis and growing oocytes in ovary.

Its subcellular location is the nucleus. Its function is as follows. Transcription repressor that binds to the promoter of target genes and prevents their expression. Acts as a negative regulator of epithelial-mesenchymal transition and metastasis in breast cancer. Specifically binds the 5'-CACCC-3' sequence in the promoter of ID1, a key metastasis regulator in breast cancer, and repress its expression. May be a germ cell-specific transcription factor that plays important roles in spermatid differentiation and oocyte development. The sequence is that of Krueppel-like factor 17 (Klf17) from Mus musculus (Mouse).